Reading from the N-terminus, the 103-residue chain is Large ribosomal subunit protein bL21 (103 aa).

It belongs to the bacterial ribosomal protein bL21 family. Part of the 50S ribosomal subunit. Contacts protein L20.

Its function is as follows. This protein binds to 23S rRNA in the presence of protein L20. This Pseudomonas aeruginosa (strain LESB58) protein is Large ribosomal subunit protein bL21.